A 521-amino-acid polypeptide reads, in one-letter code: MLRPAALAAARLVLRQGRRLLSAAPTQAVPAPNQQPEIFYNQIFINNEWHDAISKKTFPTVNPSTGDVICHVAEGDKEDVDRAVEAARAAFQLGSPWRRLDASDRGRLLNRLADLIERDRTYLAALETLDNGKPYVISYLVDLDMVLKCLRYYAGWADKYHGKTLPIDGDYFSYTRHEPVGVCGQIIPWNFPLLMQAWKLGPALATGNVVVMKVSEQTPLTALYVANLIKEAGFPPGVVNIVPGYGPTAGAAIASHEDVDKVAFTGSTEVGHLIQVAAGKSNLKRVTLELGGKSPNIIMSDADMDWAVEQAHFALFFNQGQCCCAGSRTFVQEDIYAEFVERSVARARSRVVGNPFDSRTEQGPQIDETQFKKILGYIKSGKEEGAKLLCGGGAAADRGYFIQPTVFGDVQDGMTIAKEEIFGPVMQILKFKTIEEVIGRANNSKYGLAAAVFTKDLDKANYLSQALQAGTVWVNCYDVFGAQSPFGGYKLSGSGRELGEYGLQAYTEVKTVTVKVPQKNS.

The N-terminal 21 residues, 1-21, are a transit peptide targeting the mitochondrion; the sequence is MLRPAALAAARLVLRQGRRLL. The SIFI-degron signature appears at 13-28; the sequence is VLRQGRRLLSAAPTQA. Lys56, Lys77, and Lys163 each carry N6-acetyllysine. Residue 266-271 participates in NAD(+) binding; the sequence is GSTEVG. The active-site Proton acceptor is the Glu289. The active-site Nucleophile is the Cys323. An N6-acetyllysine mark is found at Lys372, Lys379, Lys387, Lys430, Lys432, Lys445, and Lys455.

This sequence belongs to the aldehyde dehydrogenase family. Homotetramer. In response to mitochondrial stress, the precursor protein is ubiquitinated by the SIFI complex in the cytoplasm before mitochondrial import, leading to its degradation. Within the SIFI complex, UBR4 initiates ubiquitin chain that are further elongated or branched by KCMF1.

It is found in the mitochondrion matrix. It carries out the reaction an aldehyde + NAD(+) + H2O = a carboxylate + NADH + 2 H(+). The protein operates within alcohol metabolism; ethanol degradation; acetate from ethanol: step 2/2. Its function is as follows. Required for clearance of cellular formaldehyde, a cytotoxic and carcinogenic metabolite that induces DNA damage. The sequence is that of Aldehyde dehydrogenase, mitochondrial (ALDH2) from Sus scrofa (Pig).